Consider the following 870-residue polypeptide: Rho GTPase-activating protein 7 (870 aa).

The PH domain maps to 18 to 125 (TVFKSGPLFI…WKTALEQALA (108 aa)). In terms of domain architecture, Rho-GAP spans 167–367 (LALEDIDGSP…VLLEDYGSIF (201 aa)). 2 disordered regions span residues 378 to 432 (STES…SGCT) and 446 to 465 (DSDI…SNIR). A compositionally biased stretch (acidic residues) spans 407–417 (NEVEPVTDDDN). Positions 569-693 (GEDELAIQRL…HQLNQQRQTH (125 aa)) form a coiled coil. The interval 736–793 (HEENVLGAEWRNSKGAGSFGVGNSRQPSRKQIPESTNTTDSKISEESGKISVDKLSSI) is disordered. Residues 777–787 (KISEESGKISV) show a composition bias toward basic and acidic residues.

Its function is as follows. Acts as a GTPase activator for the Rac-type GTPase by converting it to an inactive GDP-bound state. The protein is Rho GTPase-activating protein 7 (ROPGAP7) of Arabidopsis thaliana (Mouse-ear cress).